The chain runs to 671 residues: Anaphase-promoting complex subunit cut9 (671 aa).

The disordered stretch occupies residues 1–24; the sequence is MVVKRTQTDSRMQSTPGNHNHPDA. 14 TPR repeats span residues 83–114, 117–142, 150–173, 198–229, 234–257, 268–296, 306–334, 341–368, 373–402, 407–435, 442–470, 475–507, 513–545, and 550–579; these read REDY…LDIT, PNDA…LLTK, SACR…LNLL, LEAS…ALMV, YEAF…LVLK, AAFL…DYLS, DLLL…ILEI, VYPL…LVDR, AVTW…SSTM, GPAW…TAAR, LPYL…SYAL, PLLL…LVKK, KPWA…GLLL, and ANVH…SLAI. The tract at residues 622–643 is disordered; it reads NLNTSDKSMSMEDQSGKVTESV.

The APC/C is composed of at least 13 subunits: apc1, apc2, nuc2, apc4, apc5, cut9, apc8, apc10, apc11, hcn1, apc13, apc14 and apc15. Homodimer. Interacts directly with nuc2 and hcn1. In terms of processing, phosphorylated.

It localises to the nucleus. Its function is as follows. Component of the anaphase-promoting complex/cyclosome (APC/C), a cell cycle-regulated E3 ubiquitin-protein ligase complex that controls progression through mitosis and the G1 phase of the cell cycle. The APC/C is thought to confer substrate specificity and, in the presence of ubiquitin-conjugating E2 enzymes, it catalyzes the formation of protein-ubiquitin conjugates that are subsequently degraded by the 26S proteasome. May play a pivotal role in the control of anaphase. The chain is Anaphase-promoting complex subunit cut9 (cut9) from Schizosaccharomyces pombe (strain 972 / ATCC 24843) (Fission yeast).